The chain runs to 372 residues: Delta-type opioid receptor (372 aa).

Residues 1–47 (MEPAPSAGAELQPPLFANASDAYPSACPSAGANASGPPGARSASSLA) are Extracellular-facing. Residues Asn-18 and Asn-33 are each glycosylated (N-linked (GlcNAc...) asparagine). The chain crosses the membrane as a helical span at residues 48-75 (LAIAITALYSAVCAVGLLGNVLVMFGIV). Residues 76–85 (RYTKMKTATN) lie on the Cytoplasmic side of the membrane. The chain crosses the membrane as a helical span at residues 86 to 110 (IYIFNLALADALATSTLPFQSAKYL). Over 111 to 122 (METWPFGELLCK) the chain is Extracellular. A disulfide bond links Cys-121 and Cys-198. Residues 123–144 (AVLSIDYYNMFTSIFTLTMMSV) traverse the membrane as a helical segment. Topologically, residues 145–163 (DRYIAVCHPVKALDFRTPA) are cytoplasmic. The chain crosses the membrane as a helical span at residues 164 to 186 (KAKLINICIWVLASGVGVPIMVM). The Extracellular segment spans residues 187 to 206 (AVTRPRDGAVVCMLQFPSPS). The helical transmembrane segment at 207-238 (WYWDTVTKICVFLFAFVVPILIITVCYGLMLL) threads the bilayer. Residues 239 to 261 (RLRSVRLLSGSKEKDRSLRRITR) lie on the Cytoplasmic side of the membrane. A helical membrane pass occupies residues 262–284 (MVLVVVGAFVVCWAPIHIFVIVW). Over 285 to 299 (TLVDIDRRDPLVVAA) the chain is Extracellular. A helical transmembrane segment spans residues 300-321 (LHLCIALGYANSSLNPVLYAFL). Over 322–372 (DENFKRCFRQLCRKPCGRPDPSSFSRAREATARERVTACTPSDGPGGGAAA) the chain is Cytoplasmic. Cys-333 is lipidated: S-palmitoyl cysteine. The segment at 340–372 (PDPSSFSRAREATARERVTACTPSDGPGGGAAA) is disordered. The segment covering 347-357 (RAREATARERV) has biased composition (basic and acidic residues).

It belongs to the G-protein coupled receptor 1 family. In terms of assembly, may form homooligomers. Forms a heterodimer with OPRM1. Interacts with GPRASP1. Interacts with RTP4; the interaction promotes cell surface localization of the OPRD1-OPRM1 heterodimer. Post-translationally, N-glycosylated. In terms of processing, ubiquitinated. A basal ubiquitination seems not to be related to degradation. Ubiquitination is increased upon formation of OPRM1:OPRD1 oligomers leading to proteasomal degradation; the ubiquitination is diminished by RTP4. In terms of tissue distribution, detected in oocytes (at protein level). Detected in brain cortex, hypothalamus, hippocampus and olfactory bulb. Detected in oocytes.

It localises to the cell membrane. In terms of biological role, G-protein coupled receptor that functions as a receptor for endogenous enkephalins and for a subset of other opioids. Ligand binding causes a conformation change that triggers signaling via guanine nucleotide-binding proteins (G proteins) and modulates the activity of down-stream effectors, such as adenylate cyclase. Signaling leads to the inhibition of adenylate cyclase activity. Inhibits neurotransmitter release by reducing calcium ion currents and increasing potassium ion conductance. Plays a role in the perception of pain and in opiate-mediated analgesia. Plays a role in developing analgesic tolerance to morphine. The protein is Delta-type opioid receptor (OPRD1) of Homo sapiens (Human).